We begin with the raw amino-acid sequence, 207 residues long: 3-isopropylmalate dehydratase small subunit (207 aa).

It belongs to the LeuD family. LeuD type 1 subfamily. In terms of assembly, heterodimer of LeuC and LeuD.

The enzyme catalyses (2R,3S)-3-isopropylmalate = (2S)-2-isopropylmalate. Its pathway is amino-acid biosynthesis; L-leucine biosynthesis; L-leucine from 3-methyl-2-oxobutanoate: step 2/4. Its function is as follows. Catalyzes the isomerization between 2-isopropylmalate and 3-isopropylmalate, via the formation of 2-isopropylmaleate. The chain is 3-isopropylmalate dehydratase small subunit from Rhodospirillum rubrum (strain ATCC 11170 / ATH 1.1.1 / DSM 467 / LMG 4362 / NCIMB 8255 / S1).